The primary structure comprises 381 residues: Pentatricopeptide repeat-containing protein 2, mitochondrial (381 aa).

The PPR repeat unit spans residues 157 to 191; that stretch reads DTTSFNITIDMLFNKQLYESGLEVVGEMKKQGVSL.

This sequence belongs to the PTCD2 family.

Its subcellular location is the mitochondrion. Involved in mitochondrial RNA maturation and mitochondrial respiratory chain function. This chain is Pentatricopeptide repeat-containing protein 2, mitochondrial (ptcd2), found in Danio rerio (Zebrafish).